We begin with the raw amino-acid sequence, 511 residues long: Probable dolichyl pyrophosphate Glc1Man9GlcNAc2 alpha-1,3-glucosyltransferase (511 aa).

A run of 11 helical transmembrane segments spans residues 4-24 (LFWH…PAYH), 94-112 (VYFQ…VLGV), 124-144 (DTQQ…LIFV), 151-171 (YNGL…RQRF), 210-230 (VVSA…PFAV), 300-320 (PAIT…PILV), 332-352 (LVFL…GWHV), 356-370 (AILM…LTLV), 377-394 (YAYV…PLLF), 432-452 (WLYM…SFLL), and 469-491 (YSAL…ISWG).

This sequence belongs to the ALG6/ALG8 glucosyltransferase family.

The protein localises to the endoplasmic reticulum membrane. It catalyses the reaction an alpha-D-Glc-(1-&gt;3)-alpha-D-Man-(1-&gt;2)-alpha-D-Man-(1-&gt;2)-alpha-D-Man-(1-&gt;3)-[alpha-D-Man-(1-&gt;2)-alpha-D-Man-(1-&gt;3)-[alpha-D-Man-(1-&gt;2)-alpha-D-Man-(1-&gt;6)]-alpha-D-Man-(1-&gt;6)]-beta-D-Man-(1-&gt;4)-beta-D-GlcNAc-(1-&gt;4)-alpha-D-GlcNAc-diphospho-di-trans,poly-cis-dolichol + a di-trans,poly-cis-dolichyl beta-D-glucosyl phosphate = an alpha-D-Glc-(1-&gt;3)-alpha-D-Glc-(1-&gt;3)-alpha-D-Man-(1-&gt;2)-alpha-D-Man-(1-&gt;2)-alpha-D-Man-(1-&gt;3)-[alpha-D-Man-(1-&gt;2)-alpha-D-Man-(1-&gt;3)-[alpha-D-Man-(1-&gt;2)-alpha-D-Man-(1-&gt;6)]-alpha-D-Man-(1-&gt;6)]-beta-D-Man-(1-&gt;4)-beta-D-GlcNAc-(1-&gt;4)-alpha-D-GlcNAc-diphospho-di-trans,poly-cis-dolichol + a di-trans,poly-cis-dolichyl phosphate + H(+). The protein operates within protein modification; protein glycosylation. Adds the second glucose residue to the lipid-linked oligosaccharide precursor for N-linked glycosylation. Transfers glucose from dolichyl phosphate glucose (Dol-P-Glc) onto the lipid-linked oligosaccharide Glc(1)Man(9)GlcNAc(2)-PP-Dol. Functions in developmental processes such as germband extension, the apical constriction of mesoderm precursor cells and ventral furrow formation in early embryogenesis prior to gastrulation. Involved in the glycosylation and intracellular distribution of shg (E-cadherin). Function in cell intercalation in the lateral epidermis during germband extension may be due to its effect on shg. The sequence is that of Probable dolichyl pyrophosphate Glc1Man9GlcNAc2 alpha-1,3-glucosyltransferase from Drosophila melanogaster (Fruit fly).